The following is a 498-amino-acid chain: Beta-amylase 5 (498 aa).

Substrate contacts are provided by Asp56, His96, and Asp104. Catalysis depends on Glu189, which acts as the Proton donor. 3 residues coordinate substrate: Lys298, His303, and Thr345. Glu383 acts as the Proton acceptor in catalysis. Substrate contacts are provided by residues Asn384–Ala385 and Arg423.

This sequence belongs to the glycosyl hydrolase 14 family. As to expression, detected in phloem sieve elements.

Its subcellular location is the cytoplasm. The enzyme catalyses Hydrolysis of (1-&gt;4)-alpha-D-glucosidic linkages in polysaccharides so as to remove successive maltose units from the non-reducing ends of the chains.. Its function is as follows. Beta-amylase activity. Major cytosolic beta-amylase isoform in rosette leaves and inflorescences stems. This Arabidopsis thaliana (Mouse-ear cress) protein is Beta-amylase 5 (BAM5).